A 38-amino-acid polypeptide reads, in one-letter code: Defensin-like peptide 3 (38 aa).

2 cysteine pairs are disulfide-bonded: cysteine 6–cysteine 36 and cysteine 13–cysteine 29.

Produced by the crural gland and detected in venom from the spur located on each male hind leg.

The protein localises to the secreted. In terms of biological role, does not show antimicrobial, myotoxic, hemolytic and cell-promoting activities. This Ornithorhynchus anatinus (Duckbill platypus) protein is Defensin-like peptide 3.